A 521-amino-acid chain; its full sequence is Ribonuclease Y 1 (521 aa).

Residues 1 to 21 form a helical membrane-spanning segment; the sequence is MEIVISAIIGLLIGGTVVFVI. Residues 51–87 form a disordered region; the sequence is IKKESENKAKDFESRARKNVEQDIHKQKSTLKNKESQ. Positions 211–271 constitute a KH domain; that stretch reads TVSVLALPND…VRRELARRTI (61 aa). One can recognise an HD domain in the interval 337–430; that stretch reads ALNQSLEVAT…VHAAYTLSSS (94 aa).

It belongs to the RNase Y family.

Its subcellular location is the cell membrane. Functionally, endoribonuclease that initiates mRNA decay. This Bdellovibrio bacteriovorus (strain ATCC 15356 / DSM 50701 / NCIMB 9529 / HD100) protein is Ribonuclease Y 1.